Reading from the N-terminus, the 78-residue chain is Large ribosomal subunit protein bL28 (78 aa).

This sequence belongs to the bacterial ribosomal protein bL28 family.

The chain is Large ribosomal subunit protein bL28 from Thermosynechococcus vestitus (strain NIES-2133 / IAM M-273 / BP-1).